The following is a 546-amino-acid chain: Chaperonin GroEL (546 aa).

ATP is bound by residues threonine 29–proline 32, lysine 50, aspartate 86–threonine 90, glycine 415, and aspartate 495. A disordered region spans residues glutamate 526 to methionine 546. Residues alanine 529 to methionine 546 show a composition bias toward gly residues.

This sequence belongs to the chaperonin (HSP60) family. Forms a cylinder of 14 subunits composed of two heptameric rings stacked back-to-back. Interacts with the co-chaperonin GroES.

It is found in the cytoplasm. It carries out the reaction ATP + H2O + a folded polypeptide = ADP + phosphate + an unfolded polypeptide.. Its function is as follows. Together with its co-chaperonin GroES, plays an essential role in assisting protein folding. The GroEL-GroES system forms a nano-cage that allows encapsulation of the non-native substrate proteins and provides a physical environment optimized to promote and accelerate protein folding. The polypeptide is Chaperonin GroEL (Christiangramia forsetii (strain DSM 17595 / CGMCC 1.15422 / KT0803) (Gramella forsetii)).